An 84-amino-acid chain; its full sequence is Small ribosomal subunit protein bS16 (84 aa).

Belongs to the bacterial ribosomal protein bS16 family.

The chain is Small ribosomal subunit protein bS16 from Burkholderia ambifaria (strain MC40-6).